The sequence spans 221 residues: Probable molybdenum cofactor guanylyltransferase (221 aa).

GTP contacts are provided by residues 17 to 19 (LAG), Lys-29, Asp-74, and Asp-103. Asp-103 provides a ligand contact to Mg(2+).

Belongs to the MobA family. It depends on Mg(2+) as a cofactor.

The protein resides in the cytoplasm. It carries out the reaction Mo-molybdopterin + GTP + H(+) = Mo-molybdopterin guanine dinucleotide + diphosphate. Transfers a GMP moiety from GTP to Mo-molybdopterin (Mo-MPT) cofactor (Moco or molybdenum cofactor) to form Mo-molybdopterin guanine dinucleotide (Mo-MGD) cofactor. This is Probable molybdenum cofactor guanylyltransferase from Peptoclostridium acidaminophilum (Eubacterium acidaminophilum).